Reading from the N-terminus, the 957-residue chain is Glycine dehydrogenase (decarboxylating) (957 aa).

K708 bears the N6-(pyridoxal phosphate)lysine mark.

It belongs to the GcvP family. As to quaternary structure, the glycine cleavage system is composed of four proteins: P, T, L and H. It depends on pyridoxal 5'-phosphate as a cofactor.

The catalysed reaction is N(6)-[(R)-lipoyl]-L-lysyl-[glycine-cleavage complex H protein] + glycine + H(+) = N(6)-[(R)-S(8)-aminomethyldihydrolipoyl]-L-lysyl-[glycine-cleavage complex H protein] + CO2. Functionally, the glycine cleavage system catalyzes the degradation of glycine. The P protein binds the alpha-amino group of glycine through its pyridoxal phosphate cofactor; CO(2) is released and the remaining methylamine moiety is then transferred to the lipoamide cofactor of the H protein. The protein is Glycine dehydrogenase (decarboxylating) of Pectobacterium atrosepticum (strain SCRI 1043 / ATCC BAA-672) (Erwinia carotovora subsp. atroseptica).